The primary structure comprises 139 residues: NADH dehydrogenase [ubiquinone] 1 alpha subcomplex subunit MCI4 (139 aa).

It belongs to the complex I NDUFA5 subunit family.

The protein localises to the mitochondrion inner membrane. Functionally, accessory subunit of the mitochondrial membrane respiratory chain NADH dehydrogenase (Complex I), that is believed not to be involved in catalysis. Complex I functions in the transfer of electrons from NADH to the respiratory chain. The immediate electron acceptor for the enzyme is believed to be ubiquinone. Involved in osmotic and oxidative resistance, yeast to hypha transition and the ability to damage and invade oral epithelial cells. The chain is NADH dehydrogenase [ubiquinone] 1 alpha subcomplex subunit MCI4 from Candida albicans (strain SC5314 / ATCC MYA-2876) (Yeast).